Consider the following 464-residue polypeptide: Argininosuccinate lyase (464 aa).

Belongs to the lyase 1 family. Argininosuccinate lyase subfamily.

It is found in the cytoplasm. The enzyme catalyses 2-(N(omega)-L-arginino)succinate = fumarate + L-arginine. Its pathway is amino-acid biosynthesis; L-arginine biosynthesis; L-arginine from L-ornithine and carbamoyl phosphate: step 3/3. This Pseudomonas aeruginosa (strain LESB58) protein is Argininosuccinate lyase.